A 406-amino-acid chain; its full sequence is Glutamyl-tRNA reductase (406 aa).

Substrate is bound by residues 50–53 (TCNR), S107, 112–114 (EPQ), and Q118. The active-site Nucleophile is the C51. 187 to 192 (GAGEMG) is a binding site for NADP(+).

Belongs to the glutamyl-tRNA reductase family. Homodimer.

It catalyses the reaction (S)-4-amino-5-oxopentanoate + tRNA(Glu) + NADP(+) = L-glutamyl-tRNA(Glu) + NADPH + H(+). It functions in the pathway porphyrin-containing compound metabolism; protoporphyrin-IX biosynthesis; 5-aminolevulinate from L-glutamyl-tRNA(Glu): step 1/2. In terms of biological role, catalyzes the NADPH-dependent reduction of glutamyl-tRNA(Glu) to glutamate 1-semialdehyde (GSA). The chain is Glutamyl-tRNA reductase from Aquifex aeolicus (strain VF5).